The sequence spans 738 residues: DNA ligase (738 aa).

NAD(+)-binding positions include 48-52 (DVVYD), 97-98 (SL), and Glu-136. The active-site N6-AMP-lysine intermediate is the Lys-138. The NAD(+) site is built by Arg-159, Glu-196, Lys-356, and Lys-380. Residues Cys-474, Cys-477, Cys-492, and Cys-497 each coordinate Zn(2+). Residues 659–738 (QLPQPLAGKT…SQLLELLEET (80 aa)) form the BRCT domain.

Belongs to the NAD-dependent DNA ligase family. LigA subfamily. Mg(2+) is required as a cofactor. It depends on Mn(2+) as a cofactor.

It catalyses the reaction NAD(+) + (deoxyribonucleotide)n-3'-hydroxyl + 5'-phospho-(deoxyribonucleotide)m = (deoxyribonucleotide)n+m + AMP + beta-nicotinamide D-nucleotide.. Functionally, DNA ligase that catalyzes the formation of phosphodiester linkages between 5'-phosphoryl and 3'-hydroxyl groups in double-stranded DNA using NAD as a coenzyme and as the energy source for the reaction. It is essential for DNA replication and repair of damaged DNA. The protein is DNA ligase of Cyanothece sp. (strain PCC 7425 / ATCC 29141).